A 367-amino-acid chain; its full sequence is Anthranilate phosphoribosyltransferase (367 aa).

Positions 1–21 are enriched in low complexity; sequence MALSSESSAASAARRPSGGPA. Residues 1–24 are disordered; sequence MALSSESSAASAARRPSGGPATSW. 5-phospho-alpha-D-ribose 1-diphosphate contacts are provided by residues Gly104, 107-108, Thr112, 114-117, 132-140, and Gly144; these read GD, NLST, and KHGNRAASS. Gly104 contacts anthranilate. A Mg(2+)-binding site is contributed by Ser116. Asn135 is a binding site for anthranilate. Arg190 contributes to the anthranilate binding site. Positions 248 and 249 each coordinate Mg(2+).

The protein belongs to the anthranilate phosphoribosyltransferase family. As to quaternary structure, homodimer. Mg(2+) serves as cofactor.

The catalysed reaction is N-(5-phospho-beta-D-ribosyl)anthranilate + diphosphate = 5-phospho-alpha-D-ribose 1-diphosphate + anthranilate. The protein operates within amino-acid biosynthesis; L-tryptophan biosynthesis; L-tryptophan from chorismate: step 2/5. Its function is as follows. Catalyzes the transfer of the phosphoribosyl group of 5-phosphorylribose-1-pyrophosphate (PRPP) to anthranilate to yield N-(5'-phosphoribosyl)-anthranilate (PRA). This is Anthranilate phosphoribosyltransferase from Mycolicibacterium paratuberculosis (strain ATCC BAA-968 / K-10) (Mycobacterium paratuberculosis).